A 132-amino-acid chain; its full sequence is Small ribosomal subunit protein uS8c (132 aa).

It belongs to the universal ribosomal protein uS8 family. Part of the 30S ribosomal subunit.

Its subcellular location is the plastid. The protein resides in the chloroplast. Its function is as follows. One of the primary rRNA binding proteins, it binds directly to 16S rRNA central domain where it helps coordinate assembly of the platform of the 30S subunit. This is Small ribosomal subunit protein uS8c (rps8) from Thalassiosira pseudonana (Marine diatom).